Consider the following 378-residue polypeptide: Probable pectin lyase A (378 aa).

The N-terminal stretch at 1–18 (MKYQDLLAIAGCIANAGA) is a signal peptide. Cystine bridges form between cysteine 81–cysteine 100 and cysteine 90–cysteine 224. An N-linked (GlcNAc...) asparagine glycan is attached at asparagine 127. Arginine 254 is an active-site residue. The cysteines at positions 321 and 329 are disulfide-linked.

Belongs to the polysaccharide lyase 1 family.

Its subcellular location is the secreted. It catalyses the reaction Eliminative cleavage of (1-&gt;4)-alpha-D-galacturonan methyl ester to give oligosaccharides with 4-deoxy-6-O-methyl-alpha-D-galact-4-enuronosyl groups at their non-reducing ends.. Its function is as follows. Pectinolytic enzymes consist of four classes of enzymes: pectin lyase, polygalacturonase, pectin methylesterase and rhamnogalacturonase. Among pectinolytic enzymes, pectin lyase is the most important in depolymerization of pectin, since it cleaves internal glycosidic bonds of highly methylated pectins. In Aspergillus fumigatus (strain CBS 144.89 / FGSC A1163 / CEA10) (Neosartorya fumigata), this protein is Probable pectin lyase A (pelA).